Reading from the N-terminus, the 270-residue chain is Cytochrome c oxidase subunit 3 (270 aa).

7 helical membrane-spanning segments follow: residues P22–M42, I46–W66, I88–W108, V128–A148, S168–I188, V205–A225, and I248–W268.

It belongs to the cytochrome c oxidase subunit 3 family. In terms of assembly, component of the cytochrome c oxidase (complex IV, CIV), a multisubunit enzyme composed of a catalytic core of 3 subunits and several supernumerary subunits. The complex exists as a monomer or a dimer and forms supercomplexes (SCs) in the inner mitochondrial membrane with ubiquinol-cytochrome c oxidoreductase (cytochrome b-c1 complex, complex III, CIII).

The protein localises to the mitochondrion inner membrane. The catalysed reaction is 4 Fe(II)-[cytochrome c] + O2 + 8 H(+)(in) = 4 Fe(III)-[cytochrome c] + 2 H2O + 4 H(+)(out). Its function is as follows. Component of the cytochrome c oxidase, the last enzyme in the mitochondrial electron transport chain which drives oxidative phosphorylation. The respiratory chain contains 3 multisubunit complexes succinate dehydrogenase (complex II, CII), ubiquinol-cytochrome c oxidoreductase (cytochrome b-c1 complex, complex III, CIII) and cytochrome c oxidase (complex IV, CIV), that cooperate to transfer electrons derived from NADH and succinate to molecular oxygen, creating an electrochemical gradient over the inner membrane that drives transmembrane transport and the ATP synthase. Cytochrome c oxidase is the component of the respiratory chain that catalyzes the reduction of oxygen to water. Electrons originating from reduced cytochrome c in the intermembrane space (IMS) are transferred via the dinuclear copper A center (CU(A)) of subunit 2 and heme A of subunit 1 to the active site in subunit 1, a binuclear center (BNC) formed by heme A3 and copper B (CU(B)). The BNC reduces molecular oxygen to 2 water molecules using 4 electrons from cytochrome c in the IMS and 4 protons from the mitochondrial matrix. The sequence is that of Cytochrome c oxidase subunit 3 (COX3) from Vanderwaltozyma polyspora (strain ATCC 22028 / DSM 70294 / BCRC 21397 / CBS 2163 / NBRC 10782 / NRRL Y-8283 / UCD 57-17) (Kluyveromyces polysporus).